A 179-amino-acid chain; its full sequence is Large ribosomal subunit protein uL5 (179 aa).

This sequence belongs to the universal ribosomal protein uL5 family. As to quaternary structure, part of the 50S ribosomal subunit; part of the 5S rRNA/L5/L18/L25 subcomplex. Contacts the 5S rRNA and the P site tRNA. Forms a bridge to the 30S subunit in the 70S ribosome.

In terms of biological role, this is one of the proteins that bind and probably mediate the attachment of the 5S RNA into the large ribosomal subunit, where it forms part of the central protuberance. In the 70S ribosome it contacts protein S13 of the 30S subunit (bridge B1b), connecting the 2 subunits; this bridge is implicated in subunit movement. Contacts the P site tRNA; the 5S rRNA and some of its associated proteins might help stabilize positioning of ribosome-bound tRNAs. This Azotobacter vinelandii (strain DJ / ATCC BAA-1303) protein is Large ribosomal subunit protein uL5.